The primary structure comprises 290 residues: 33 kDa chaperonin (290 aa).

2 disulfide bridges follow: C235-C237 and C268-C271.

It belongs to the HSP33 family. Post-translationally, under oxidizing conditions two disulfide bonds are formed involving the reactive cysteines. Under reducing conditions zinc is bound to the reactive cysteines and the protein is inactive.

The protein resides in the cytoplasm. In terms of biological role, redox regulated molecular chaperone. Protects both thermally unfolding and oxidatively damaged proteins from irreversible aggregation. Plays an important role in the bacterial defense system toward oxidative stress. This Streptococcus pyogenes serotype M49 (strain NZ131) protein is 33 kDa chaperonin.